A 466-amino-acid polypeptide reads, in one-letter code: 3-isopropylmalate dehydratase large subunit (466 aa).

Cys-345, Cys-405, and Cys-408 together coordinate [4Fe-4S] cluster.

Belongs to the aconitase/IPM isomerase family. LeuC type 1 subfamily. As to quaternary structure, heterodimer of LeuC and LeuD. It depends on [4Fe-4S] cluster as a cofactor.

The catalysed reaction is (2R,3S)-3-isopropylmalate = (2S)-2-isopropylmalate. The protein operates within amino-acid biosynthesis; L-leucine biosynthesis; L-leucine from 3-methyl-2-oxobutanoate: step 2/4. In terms of biological role, catalyzes the isomerization between 2-isopropylmalate and 3-isopropylmalate, via the formation of 2-isopropylmaleate. This Microcystis aeruginosa (strain NIES-843 / IAM M-2473) protein is 3-isopropylmalate dehydratase large subunit.